The sequence spans 247 residues: 14-3-3 protein gamma (247 aa).

Met-1 is subject to N-acetylmethionine. N-acetylvaline; in 14-3-3 protein gamma, N-terminally processed is present on Val-2. Residues 2 to 247 (VDREQLVQKA…QDDDGGEGNN (246 aa)) are interaction with SPATA18/MIEAP. Ser-71 is modified (phosphoserine). Tyr-133 carries the post-translational modification Phosphotyrosine. Thr-145 carries the phosphothreonine modification. Residue Ser-215 is modified to Phosphoserine. Position 234 is a phosphothreonine (Thr-234). Position 235 is a phosphoserine (Ser-235).

It belongs to the 14-3-3 family. In terms of assembly, homodimer. Part of a complex that contains DSG3, PKP1, YAP1 and YWHAG; the complex is required for localization of DSG3 and YAP1 to the cell membrane in keratinocytes. Interacts with SAMSN1. Interacts with RAF1, SSH1 and CRTC2/TORC2. Interacts with ABL1 (phosphorylated form); the interaction retains it in the cytoplasm. Interacts with GAB2. Interacts with MDM4 (phosphorylated); negatively regulates MDM4 activity toward TP53. Interacts with PKA-phosphorylated AANAT and SIRT2. Interacts with the 'Thr-369' phosphorylated form of DAPK2. Interacts with PI4KB, TBC1D22A and TBC1D22B. Interacts with SLITRK1. Interacts with LRRK2; this interaction is dependent on LRRK2 phosphorylation. Interacts with MARK2 and MARK3. Interacts with MEFV. Interacts with ENDOG, TSC2 and PIK3C3; interaction with ENDOG weakens its interaction with TSC2 and PIK3C3. Interacts with (phosphorylated) WDR24. Interacts with BEST1; this interaction promotes L-glutamate channel activity leading to the positive regulation of NMDA glutamate receptor activity through the L-glutamate secretion. Interacts with PKP1 (when phosphorylated); the interaction results in translocation of PKP1 to the cytoplasm and loss of intercellular adhesion in keratinocytes. Interacts with SPATA18/MIEAP; a protein that also plays a role in MALM. Post-translationally, phosphorylated by various PKC isozymes.

It localises to the cytoplasm. The protein resides in the cytosol. Its subcellular location is the mitochondrion matrix. Its function is as follows. Adapter protein implicated in the regulation of a large spectrum of both general and specialized signaling pathways. Binds to a large number of partners, usually by recognition of a phosphoserine or phosphothreonine motif. Binding generally results in the modulation of the activity of the binding partner. Promotes inactivation of WDR24 component of the GATOR2 complex by binding to phosphorylated WDR24. Participates in the positive regulation of NMDA glutamate receptor activity by promoting the L-glutamate secretion through interaction with BEST1. Reduces keratinocyte intercellular adhesion, via interacting with PKP1 and sequestering it in the cytoplasm, thereby reducing its incorporation into desmosomes. Plays a role in mitochondrial protein catabolic process (also named MALM) that promotes the degradation of damaged proteins inside mitochondria. The sequence is that of 14-3-3 protein gamma from Bos taurus (Bovine).